The sequence spans 299 residues: GTP cyclohydrolase FolE2 (299 aa).

The disordered stretch occupies residues 1–25 (MKTKQWPSKTERHKRFGSVPPVAGK).

It belongs to the GTP cyclohydrolase IV family.

The enzyme catalyses GTP + H2O = 7,8-dihydroneopterin 3'-triphosphate + formate + H(+). The protein operates within cofactor biosynthesis; 7,8-dihydroneopterin triphosphate biosynthesis; 7,8-dihydroneopterin triphosphate from GTP: step 1/1. Its function is as follows. Converts GTP to 7,8-dihydroneopterin triphosphate. The chain is GTP cyclohydrolase FolE2 from Halalkalibacterium halodurans (strain ATCC BAA-125 / DSM 18197 / FERM 7344 / JCM 9153 / C-125) (Bacillus halodurans).